The sequence spans 396 residues: L-lactate dehydrogenase (396 aa).

The region spanning 1–380 (MIISAASDYR…SRDSLVQELG (380 aa)) is the FMN hydroxy acid dehydrogenase domain. Tyrosine 24 provides a ligand contact to substrate. FMN is bound by residues serine 106 and glutamine 127. Tyrosine 129 provides a ligand contact to substrate. An FMN-binding site is contributed by threonine 155. Residue arginine 164 participates in substrate binding. Lysine 251 contacts FMN. Histidine 275 functions as the Proton acceptor in the catalytic mechanism. Arginine 278 lines the substrate pocket. Position 306 to 330 (306 to 330 (DSGIRNGLDVVRMIALGADSVLLGR)) interacts with FMN.

This sequence belongs to the FMN-dependent alpha-hydroxy acid dehydrogenase family. It depends on FMN as a cofactor.

It localises to the cell inner membrane. It carries out the reaction (S)-lactate + A = pyruvate + AH2. Catalyzes the conversion of L-lactate to pyruvate. Is coupled to the respiratory chain. The polypeptide is L-lactate dehydrogenase (Citrobacter koseri (strain ATCC BAA-895 / CDC 4225-83 / SGSC4696)).